Consider the following 123-residue polypeptide: UPF0102 protein CLM_2733 (123 aa).

The protein belongs to the UPF0102 family.

The chain is UPF0102 protein CLM_2733 from Clostridium botulinum (strain Kyoto / Type A2).